A 969-amino-acid polypeptide reads, in one-letter code: RNA polymerase-associated protein RapA (969 aa).

The region spanning 164-334 (EVGRRYAPRV…FARLRLLDPD (171 aa)) is the Helicase ATP-binding domain. 177–184 (DEVGLGKT) is a binding site for ATP. The short motif at 280–283 (DEAH) is the DEAH box element. The region spanning 492–672 (RVNWLLELLK…GLEPLIEESA (181 aa)) is the Helicase C-terminal domain.

It belongs to the SNF2/RAD54 helicase family. RapA subfamily. As to quaternary structure, interacts with the RNAP. Has a higher affinity for the core RNAP than for the holoenzyme. Its ATPase activity is stimulated by binding to RNAP.

Functionally, transcription regulator that activates transcription by stimulating RNA polymerase (RNAP) recycling in case of stress conditions such as supercoiled DNA or high salt concentrations. Probably acts by releasing the RNAP, when it is trapped or immobilized on tightly supercoiled DNA. Does not activate transcription on linear DNA. Probably not involved in DNA repair. This chain is RNA polymerase-associated protein RapA, found in Aliivibrio salmonicida (strain LFI1238) (Vibrio salmonicida (strain LFI1238)).